The sequence spans 215 residues: uncharacterized protein (215 aa).

Helical transmembrane passes span 21–40 (IIKY…VLIN), 50–69 (LIFS…SVIF), 95–117 (FFAI…YVLF), 122–144 (LEII…LVVL), 156–178 (ANFV…GLIL), and 183–205 (LQLI…FLSS).

The protein belongs to the CcmB/CycW/HelB family.

The protein resides in the cell membrane. This is an uncharacterized protein from Rickettsia conorii (strain ATCC VR-613 / Malish 7).